The following is a 396-amino-acid chain: L-lactate dehydrogenase (396 aa).

In terms of domain architecture, FMN hydroxy acid dehydrogenase spans 1–380; it reads MIISAASDYR…TQDSLVQGLG (380 aa). Residue tyrosine 24 coordinates substrate. FMN-binding residues include serine 106 and glutamine 127. Tyrosine 129 contributes to the substrate binding site. Threonine 155 is an FMN binding site. Arginine 164 provides a ligand contact to substrate. Lysine 251 provides a ligand contact to FMN. Histidine 275 (proton acceptor) is an active-site residue. Substrate is bound at residue arginine 278. 306 to 330 contacts FMN; the sequence is DSGIRNGLDVVRMIALGADTVLLGR.

This sequence belongs to the FMN-dependent alpha-hydroxy acid dehydrogenase family. The cofactor is FMN.

The protein resides in the cell inner membrane. The enzyme catalyses (S)-lactate + A = pyruvate + AH2. In terms of biological role, catalyzes the conversion of L-lactate to pyruvate. Is coupled to the respiratory chain. In Shigella dysenteriae serotype 1 (strain Sd197), this protein is L-lactate dehydrogenase.